The primary structure comprises 316 residues: Ubiquinol oxidase, mitochondrial (316 aa).

The N-terminal 26 residues, M1–S26, are a transit peptide targeting the mitochondrion. The chain crosses the membrane as a helical span at residues V124–L144. Fe cation contacts are provided by E131, E170, and H173. The chain crosses the membrane as a helical span at residues M189–F209. 3 residues coordinate Fe cation: E221, E272, and H275.

This sequence belongs to the alternative oxidase family. Fe cation is required as a cofactor.

Its subcellular location is the mitochondrion inner membrane. The catalysed reaction is 2 a ubiquinol + O2 = 2 a ubiquinone + 2 H2O. Functionally, alternative oxidase which function may be to reoxidize reducing equivalents produced by glycolysis such as ubiquinol. The sequence is that of Ubiquinol oxidase, mitochondrial (AOX) from Batrachochytrium dendrobatidis (strain JAM81 / FGSC 10211) (Frog chytrid fungus).